The primary structure comprises 65 residues: U15-hexatoxin-Mg1a (65 aa).

In terms of processing, contains 4 disulfide bonds. Expressed by the venom gland.

It is found in the secreted. Intrathorax injection into crickets causes paralysis prolonged for more than 60 minutes, followed by recovery. The polypeptide is U15-hexatoxin-Mg1a (Macrothele gigas (Japanese funnel web spider)).